Consider the following 500-residue polypeptide: Beta-glucosidase 28 (500 aa).

Positions 1–24 (MDRRLLLSALLFIALACSSNRVHG) are cleaved as a signal peptide. Residue Q45 coordinates a beta-D-glucoside. N111 carries an N-linked (GlcNAc...) asparagine glycan. Residues H146 and 191-192 (NE) contribute to the a beta-D-glucoside site. E192 (proton donor) is an active-site residue. Residues C211 and C219 are joined by a disulfide bond. Position 337 (Y337) interacts with a beta-D-glucoside. The N-linked (GlcNAc...) asparagine glycan is linked to N362. An a beta-D-glucoside-binding site is contributed by E408. E408 (nucleophile) is an active-site residue. N-linked (GlcNAc...) asparagine glycosylation is found at N409, N415, and N416. Residues W457, 464–465 (EF), and F473 each bind a beta-D-glucoside.

It belongs to the glycosyl hydrolase 1 family.

The catalysed reaction is Hydrolysis of terminal, non-reducing beta-D-glucosyl residues with release of beta-D-glucose.. The sequence is that of Beta-glucosidase 28 (BGLU28) from Oryza sativa subsp. japonica (Rice).